Consider the following 573-residue polypeptide: Methionine--tRNA ligase (573 aa).

A 'HIGH' region motif is present at residues 10–20; sequence PYVNSVPHLGN. Positions 143, 146, 156, and 159 each coordinate Zn(2+). The short motif at 333–337 is the 'KMSKS' region element; the sequence is KFSKS. Residue Lys-336 participates in ATP binding.

The protein belongs to the class-I aminoacyl-tRNA synthetase family. MetG type 1 subfamily. Requires Zn(2+) as cofactor.

The protein localises to the cytoplasm. It catalyses the reaction tRNA(Met) + L-methionine + ATP = L-methionyl-tRNA(Met) + AMP + diphosphate. Its function is as follows. Is required not only for elongation of protein synthesis but also for the initiation of all mRNA translation through initiator tRNA(fMet) aminoacylation. The polypeptide is Methionine--tRNA ligase (Saccharolobus solfataricus (strain ATCC 35092 / DSM 1617 / JCM 11322 / P2) (Sulfolobus solfataricus)).